The chain runs to 149 residues: Small ribosomal subunit protein uS9 (149 aa).

Belongs to the universal ribosomal protein uS9 family.

The protein localises to the cytoplasm. The sequence is that of Small ribosomal subunit protein uS9 (RPS16A) from Oryza sativa subsp. indica (Rice).